Here is an 872-residue protein sequence, read N- to C-terminus: Leucine--tRNA ligase (872 aa).

The 'HIGH' region motif lies at 56-66 (PYPSGNLHMGH). Positions 629–633 (KMSKS) match the 'KMSKS' region motif. Lys632 is a binding site for ATP.

The protein belongs to the class-I aminoacyl-tRNA synthetase family.

Its subcellular location is the cytoplasm. It catalyses the reaction tRNA(Leu) + L-leucine + ATP = L-leucyl-tRNA(Leu) + AMP + diphosphate. The polypeptide is Leucine--tRNA ligase (Prochlorococcus marinus (strain MIT 9211)).